Reading from the N-terminus, the 284-residue chain is Tropomyosin (284 aa).

Positions 1–280 form a coiled coil; sequence MDAIKKKMQA…SDELDQTFAE (280 aa).

The protein belongs to the tropomyosin family. In terms of assembly, homodimer.

Tropomyosin, in association with the troponin complex, plays a central role in the calcium dependent regulation of muscle contraction. The chain is Tropomyosin from Sinonovacula constricta (Razor clam).